The following is a 529-amino-acid chain: UDP-glucuronosyltransferase 2B23 (529 aa).

A signal peptide spans 1–24 (MSVKWTSVILLIQLSFYFSSGSCG). N-linked (GlcNAc...) asparagine glycans are attached at residues N67 and N68. Residues 494 to 514 (IGFLLACVATVIFIIMKCCLF) traverse the membrane as a helical segment.

This sequence belongs to the UDP-glycosyltransferase family. As to expression, expressed in several tissues, including the prostate, mammary gland, epididymis, testis and ovary.

Its subcellular location is the microsome membrane. The protein resides in the endoplasmic reticulum membrane. The catalysed reaction is glucuronate acceptor + UDP-alpha-D-glucuronate = acceptor beta-D-glucuronoside + UDP + H(+). UDPGTs are of major importance in the conjugation and subsequent elimination of potentially toxic xenobiotics and endogenous compounds. This isozyme has glucuronidating capacity on 6 steroids and the bile acid, hyodeoxycholic acid. May potentially play an important role in estrogen and androgen catabolism in peripheral steroid target tissues. The sequence is that of UDP-glucuronosyltransferase 2B23 (UGT2B23) from Macaca fascicularis (Crab-eating macaque).